The sequence spans 465 residues: 23S rRNA (uracil(1939)-C(5))-methyltransferase RlmD (465 aa).

Residues 1-22 (MSEAVPTSARKSKNAPVAPGPA) are disordered. In terms of domain architecture, TRAM spans 16–80 (PVAPGPAPVL…PSYEQATVVD (65 aa)). [4Fe-4S] cluster contacts are provided by cysteine 93, cysteine 99, cysteine 102, and cysteine 181. S-adenosyl-L-methionine contacts are provided by glutamine 289, phenylalanine 318, asparagine 323, glutamate 339, asparagine 367, and aspartate 388. Residue cysteine 421 is the Nucleophile of the active site.

This sequence belongs to the class I-like SAM-binding methyltransferase superfamily. RNA M5U methyltransferase family. RlmD subfamily.

The enzyme catalyses uridine(1939) in 23S rRNA + S-adenosyl-L-methionine = 5-methyluridine(1939) in 23S rRNA + S-adenosyl-L-homocysteine + H(+). Its function is as follows. Catalyzes the formation of 5-methyl-uridine at position 1939 (m5U1939) in 23S rRNA. The chain is 23S rRNA (uracil(1939)-C(5))-methyltransferase RlmD from Burkholderia ambifaria (strain ATCC BAA-244 / DSM 16087 / CCUG 44356 / LMG 19182 / AMMD) (Burkholderia cepacia (strain AMMD)).